A 136-amino-acid polypeptide reads, in one-letter code: Small ribosomal subunit protein uS9 (136 aa).

Residues 95–136 form a disordered region; the sequence is GLSPDNRKPLKTEGHLSRDPRSKERKKYGLKKARKAGQFSKR. The segment covering 99 to 116 has biased composition (basic and acidic residues); the sequence is DNRKPLKTEGHLSRDPRS. The span at 117-136 shows a compositional bias: basic residues; the sequence is KERKKYGLKKARKAGQFSKR.

This sequence belongs to the universal ribosomal protein uS9 family.

The sequence is that of Small ribosomal subunit protein uS9 from Prochlorococcus marinus subsp. pastoris (strain CCMP1986 / NIES-2087 / MED4).